A 422-amino-acid chain; its full sequence is Adenylosuccinate synthetase (422 aa).

Residues 11–17 (GDEGKGK) and 39–41 (GHT) each bind GTP. Catalysis depends on D12, which acts as the Proton acceptor. Residues D12 and G39 each contribute to the Mg(2+) site. Residues 12–15 (DEGK), 37–40 (NAGH), T129, R143, N219, T234, and R298 each bind IMP. Catalysis depends on H40, which acts as the Proton donor. Position 294–300 (294–300 (VTTGRKR)) interacts with substrate. Residues R300, 326–328 (KLD), and 411–413 (GTG) contribute to the GTP site.

It belongs to the adenylosuccinate synthetase family. In terms of assembly, homodimer. Mg(2+) serves as cofactor.

The protein localises to the cytoplasm. The catalysed reaction is IMP + L-aspartate + GTP = N(6)-(1,2-dicarboxyethyl)-AMP + GDP + phosphate + 2 H(+). It participates in purine metabolism; AMP biosynthesis via de novo pathway; AMP from IMP: step 1/2. Plays an important role in the de novo pathway and in the salvage pathway of purine nucleotide biosynthesis. Catalyzes the first committed step in the biosynthesis of AMP from IMP. This chain is Adenylosuccinate synthetase, found in Talaromyces stipitatus (strain ATCC 10500 / CBS 375.48 / QM 6759 / NRRL 1006) (Penicillium stipitatum).